The sequence spans 291 residues: Pyridoxal 5'-phosphate synthase subunit PdxS (291 aa).

D23 lines the D-ribose 5-phosphate pocket. The active-site Schiff-base intermediate with D-ribose 5-phosphate is K80. Position 152 (G152) interacts with D-ribose 5-phosphate. Residue R164 participates in D-glyceraldehyde 3-phosphate binding. Residues G213 and G234–S235 contribute to the D-ribose 5-phosphate site.

Belongs to the PdxS/SNZ family. As to quaternary structure, in the presence of PdxT, forms a dodecamer of heterodimers.

The enzyme catalyses aldehydo-D-ribose 5-phosphate + D-glyceraldehyde 3-phosphate + L-glutamine = pyridoxal 5'-phosphate + L-glutamate + phosphate + 3 H2O + H(+). Its pathway is cofactor biosynthesis; pyridoxal 5'-phosphate biosynthesis. In terms of biological role, catalyzes the formation of pyridoxal 5'-phosphate from ribose 5-phosphate (RBP), glyceraldehyde 3-phosphate (G3P) and ammonia. The ammonia is provided by the PdxT subunit. Can also use ribulose 5-phosphate and dihydroxyacetone phosphate as substrates, resulting from enzyme-catalyzed isomerization of RBP and G3P, respectively. The sequence is that of Pyridoxal 5'-phosphate synthase subunit PdxS from Methanocorpusculum labreanum (strain ATCC 43576 / DSM 4855 / Z).